The primary structure comprises 171 residues: Myelin basic protein (171 aa).

An N-acetylalanine modification is found at alanine 1. Residues 1-12 (ASQKRPSQRHGS) show a composition bias toward basic residues. Positions 1 to 171 (ASQKRPSQRH…SRSGSPMARR (171 aa)) are disordered. Residues serine 7 and serine 12 each carry the phosphoserine modification. The residue at position 14 (tyrosine 14) is a Phosphotyrosine. Residue serine 19 is modified to Phosphoserine. Threonine 20 carries the post-translational modification Phosphothreonine. Arginine 25 and arginine 31 each carry citrulline. Position 35 is a phosphothreonine (threonine 35). Phosphoserine is present on serine 39. Omega-N-methylarginine is present on residues arginine 42 and arginine 48. A Phosphoserine modification is found at serine 55. Threonine 66 carries the post-translational modification Phosphothreonine. Residue tyrosine 68 is modified to Phosphotyrosine. A phosphothreonine mark is found at threonine 95 and threonine 98. Glutamine 103 is modified (deamidated glutamine). Omega-N-methylarginine; alternate is present on arginine 107. Arginine 107 bears the Symmetric dimethylarginine; alternate mark. At serine 115 the chain carries Phosphoserine. At lysine 122 the chain carries N6-acetyllysine. Arginine 130 is subject to Citrulline. Glutamine 148 is modified (deamidated glutamine). At arginine 160 the chain carries Citrulline. Serine 162 is subject to Phosphoserine. Serine 166 carries the phosphoserine; by UHMK1 modification. Citrulline is present on arginine 171.

Belongs to the myelin basic protein family. Homodimer. In terms of processing, as in other animals, several charge isomers may be produced as a result of optional post-translational modifications, such as phosphorylation of serine or threonine residues, deamidation of glutamine or asparagine residues, citrullination and methylation of arginine residues. Phosphorylated by TAOK2, VRK2, MAPK11, MAPK12, MAPK14 and MINK1. Post-translationally, proteolytically cleaved in B cell lysosomes by cathepsin CTSG which degrades the major immunogenic MBP epitope and prevents the activation of MBP-specific autoreactive T cells.

The protein resides in the myelin membrane. Its function is as follows. Is, with PLP, the most abundant protein component of the myelin membrane in the CNS. Has a role in both the formation and stabilization of this compact multilayer arrangement of bilayers. Each splice variant and charge isomer may have a specialized function in the assembly of an optimized, biochemically functional myelin membrane. The chain is Myelin basic protein (MBP) from Sus scrofa (Pig).